The primary structure comprises 111 residues: Large ribosomal subunit protein uL23 (111 aa).

This sequence belongs to the universal ribosomal protein uL23 family. In terms of assembly, part of the 50S ribosomal subunit. Contacts protein L29, and trigger factor when it is bound to the ribosome.

Its function is as follows. One of the early assembly proteins it binds 23S rRNA. One of the proteins that surrounds the polypeptide exit tunnel on the outside of the ribosome. Forms the main docking site for trigger factor binding to the ribosome. The polypeptide is Large ribosomal subunit protein uL23 (Chlamydia abortus (strain DSM 27085 / S26/3) (Chlamydophila abortus)).